We begin with the raw amino-acid sequence, 94 residues long: MSSDDKSKSNDPKTEPKNCDPKCEQKCESKCQPSCLKKLLQRCSEKCPREKCPAPPKCPPCPSPSPSSCPPKPCAKPCPPKCPSSCPPPCPPPE.

2 disordered regions span residues 1–26 and 47–94; these read MSSDDKSKSNDPKTEPKNCDPKCEQK and CPRE…PPPE. The span at 53–94 shows a compositional bias: pro residues; sequence PAPPKCPPCPSPSPSSCPPKPCAKPCPPKCPSSCPPPCPPPE.

Belongs to the cornifin (SPRR) family.

This Macaca fascicularis (Crab-eating macaque) protein is Late cornified envelope-like proline-rich protein 1 (LELP1).